A 271-amino-acid polypeptide reads, in one-letter code: Energy-coupling factor transporter ATP-binding protein EcfA (271 aa).

The ABC transporter domain occupies 2–231; that stretch reads ISIQNLTFYY…PLFLQQYKLN (230 aa). Residue 34–41 participates in ATP binding; it reads GHNGSGKS.

Belongs to the ABC transporter superfamily. Energy-coupling factor EcfA family. In terms of assembly, forms a stable energy-coupling factor (ECF) transporter complex composed of 2 membrane-embedded substrate-binding proteins (S component), 2 ATP-binding proteins (A component) and 2 transmembrane proteins (T component).

The protein resides in the cell membrane. Its function is as follows. ATP-binding (A) component of a common energy-coupling factor (ECF) ABC-transporter complex. Unlike classic ABC transporters this ECF transporter provides the energy necessary to transport a number of different substrates. This Onion yellows phytoplasma (strain OY-M) protein is Energy-coupling factor transporter ATP-binding protein EcfA.